The sequence spans 489 residues: Glutamyl-tRNA(Gln) amidotransferase subunit A (489 aa).

Residues Lys-80 and Ser-160 each act as charge relay system in the active site. Ser-184 functions as the Acyl-ester intermediate in the catalytic mechanism.

Belongs to the amidase family. GatA subfamily. As to quaternary structure, heterotrimer of A, B and C subunits.

The enzyme catalyses L-glutamyl-tRNA(Gln) + L-glutamine + ATP + H2O = L-glutaminyl-tRNA(Gln) + L-glutamate + ADP + phosphate + H(+). Allows the formation of correctly charged Gln-tRNA(Gln) through the transamidation of misacylated Glu-tRNA(Gln) in organisms which lack glutaminyl-tRNA synthetase. The reaction takes place in the presence of glutamine and ATP through an activated gamma-phospho-Glu-tRNA(Gln). This is Glutamyl-tRNA(Gln) amidotransferase subunit A from Wolbachia sp. subsp. Drosophila simulans (strain wRi).